We begin with the raw amino-acid sequence, 1779 residues long: 5-methyl-1-naphthoate synthase (1779 aa).

Residues 10–433 (VEPLAVIGMS…GSIAHAVLQQ (424 aa)) enclose the Ketosynthase family 3 (KS3) domain. Active-site for beta-ketoacyl synthase activity residues include cysteine 181, histidine 316, and histidine 356. Residues 902 to 1027 (HTLIGARTTV…ATVVHEPEVG (126 aa)) are N-terminal hotdog fold. Residues 902–1180 (HTLIGARTTV…YVKVQDIGSG (279 aa)) enclose the PKS/mFAS DH domain. The segment at 1042–1180 (PVSWTWAKVD…YVKVQDIGSG (139 aa)) is C-terminal hotdog fold. The Carrier domain occupies 1664–1742 (GELPELVLKV…ALAEFLAAEV (79 aa)). Residue serine 1702 is modified to O-(pantetheine 4'-phosphoryl)serine. The tract at residues 1746–1771 (TADAEETDPVAGLPAPQQGSGTAEQL) is disordered.

It catalyses the reaction 5 malonyl-CoA + acetyl-CoA + 3 NADPH + 7 H(+) = 5-methyl-1-naphthoate + 5 CO2 + 3 NADP(+) + 6 CoA + 4 H2O. Its pathway is antibiotic biosynthesis. Polyketide synthase that catalyzes the biosynthesis of the bicyclic aromatic compound 5-methyl-1-naphthoate in the biosynthesis of the antitumor antibiotic azinomycin B. This chain is 5-methyl-1-naphthoate synthase, found in Streptomyces sahachiroi.